The chain runs to 656 residues: DNA ligase (656 aa).

NAD(+) is bound by residues 32–36 (DAVYD) and 81–82 (SL). Lysine 112 functions as the N6-AMP-lysine intermediate in the catalytic mechanism. NAD(+) is bound by residues arginine 133, glutamate 167, and lysine 306. Zn(2+) contacts are provided by cysteine 400, cysteine 403, cysteine 416, and cysteine 421. Residues 577-656 (KSSSVFNNKT…ELLKRLKELD (80 aa)) enclose the BRCT domain.

This sequence belongs to the NAD-dependent DNA ligase family. LigA subfamily. The cofactor is Mg(2+). Mn(2+) serves as cofactor.

It carries out the reaction NAD(+) + (deoxyribonucleotide)n-3'-hydroxyl + 5'-phospho-(deoxyribonucleotide)m = (deoxyribonucleotide)n+m + AMP + beta-nicotinamide D-nucleotide.. In terms of biological role, DNA ligase that catalyzes the formation of phosphodiester linkages between 5'-phosphoryl and 3'-hydroxyl groups in double-stranded DNA using NAD as a coenzyme and as the energy source for the reaction. It is essential for DNA replication and repair of damaged DNA. The protein is DNA ligase of Helicobacter pylori (strain P12).